We begin with the raw amino-acid sequence, 394 residues long: Queuine tRNA-ribosyltransferase (394 aa).

D99 serves as the catalytic Proton acceptor. Residues 99 to 103, D153, Q195, and G222 each bind substrate; that span reads DSGGF. An RNA binding region spans residues 253–259; sequence GVGHPED. The active-site Nucleophile is D272. The interval 277-281 is RNA binding; important for wobble base 34 recognition; it reads TRTGR. Zn(2+)-binding residues include C310, C312, C315, and H341.

The protein belongs to the queuine tRNA-ribosyltransferase family. In terms of assembly, homodimer. Within each dimer, one monomer is responsible for RNA recognition and catalysis, while the other monomer binds to the replacement base PreQ1. Requires Zn(2+) as cofactor.

The enzyme catalyses 7-aminomethyl-7-carbaguanine + guanosine(34) in tRNA = 7-aminomethyl-7-carbaguanosine(34) in tRNA + guanine. The protein operates within tRNA modification; tRNA-queuosine biosynthesis. Functionally, catalyzes the base-exchange of a guanine (G) residue with the queuine precursor 7-aminomethyl-7-deazaguanine (PreQ1) at position 34 (anticodon wobble position) in tRNAs with GU(N) anticodons (tRNA-Asp, -Asn, -His and -Tyr). Catalysis occurs through a double-displacement mechanism. The nucleophile active site attacks the C1' of nucleotide 34 to detach the guanine base from the RNA, forming a covalent enzyme-RNA intermediate. The proton acceptor active site deprotonates the incoming PreQ1, allowing a nucleophilic attack on the C1' of the ribose to form the product. After dissociation, two additional enzymatic reactions on the tRNA convert PreQ1 to queuine (Q), resulting in the hypermodified nucleoside queuosine (7-(((4,5-cis-dihydroxy-2-cyclopenten-1-yl)amino)methyl)-7-deazaguanosine). This is Queuine tRNA-ribosyltransferase from Deinococcus radiodurans (strain ATCC 13939 / DSM 20539 / JCM 16871 / CCUG 27074 / LMG 4051 / NBRC 15346 / NCIMB 9279 / VKM B-1422 / R1).